A 432-amino-acid polypeptide reads, in one-letter code: MTSAKTASAPDSFFTASLDQADPEIAAAIKGELGRQRHEVELIASENIVSRAVLEAQGSVMTNKYAEGYPGARYYGGCEWVDVAENLAIDRAKKLFGAGFANVQPNSGSQMNQAVFLALLQPGDTFMGLDLAAGGHLTHGSPVNMSGKWFKAAHYTVRREDQIIDMDAVQKQAEEIKPKLIVAGGSAYSRAWDFKRFREIADSVGAYLLVDMAHFAGLVAGGVHASPVPYAHVTTTTTHKSLRGPRGGLILSNDETLAKKLNSAIFPGLQGGPLMHVIAAKAVAFGEALRPDFKVYAKNVVENAKALAEAMKSHGFDIVSGGTDNHLMLVDLRPKGLKGNVSEKALVRAAITCNKNGIPFDPEKPFVTSGLRLGTPAATTRGFGVAEFQQVGGMIAEVLNAIAQSDDGKAPLVEAAIKERVKALTDRFPIYQ.

(6S)-5,6,7,8-tetrahydrofolate-binding positions include Leu131 and Gly135–Leu137. The residue at position 240 (Lys240) is an N6-(pyridoxal phosphate)lysine.

The protein belongs to the SHMT family. In terms of assembly, homodimer. Pyridoxal 5'-phosphate serves as cofactor.

Its subcellular location is the cytoplasm. It catalyses the reaction (6R)-5,10-methylene-5,6,7,8-tetrahydrofolate + glycine + H2O = (6S)-5,6,7,8-tetrahydrofolate + L-serine. Its pathway is one-carbon metabolism; tetrahydrofolate interconversion. The protein operates within amino-acid biosynthesis; glycine biosynthesis; glycine from L-serine: step 1/1. Its function is as follows. Catalyzes the reversible interconversion of serine and glycine with tetrahydrofolate (THF) serving as the one-carbon carrier. This reaction serves as the major source of one-carbon groups required for the biosynthesis of purines, thymidylate, methionine, and other important biomolecules. Also exhibits THF-independent aldolase activity toward beta-hydroxyamino acids, producing glycine and aldehydes, via a retro-aldol mechanism. This chain is Serine hydroxymethyltransferase, found in Bradyrhizobium diazoefficiens (strain JCM 10833 / BCRC 13528 / IAM 13628 / NBRC 14792 / USDA 110).